A 22-amino-acid polypeptide reads, in one-letter code: Motilin (22 aa).

A disordered region spans residues 1-22 (FVPIFTHSELQKIREKERNKGQ). Basic and acidic residues predominate over residues 9-22 (ELQKIREKERNKGQ).

The protein belongs to the motilin family.

It localises to the secreted. Functionally, plays an important role in the regulation of interdigestive gastrointestinal motility and indirectly causes rhythmic contraction of duodenal and colonic smooth muscle. The polypeptide is Motilin (MLN) (Canis lupus familiaris (Dog)).